Consider the following 105-residue polypeptide: Met repressor (105 aa).

It belongs to the MetJ family. As to quaternary structure, homodimer.

The protein resides in the cytoplasm. This regulatory protein, when combined with SAM (S-adenosylmethionine) represses the expression of the methionine regulon and of enzymes involved in SAM synthesis. In Haemophilus ducreyi (strain 35000HP / ATCC 700724), this protein is Met repressor.